A 788-amino-acid polypeptide reads, in one-letter code: Diacylglycerol kinase gamma (788 aa).

Over residues P83–E93 the composition is skewed to basic and acidic residues. Residues P83 to S150 form a disordered region. Over residues A95 to S109 the composition is skewed to polar residues. 2 EF-hand domains span residues R172–V207 and E217–L252. Ca(2+) contacts are provided by D185, D187, N189, E196, D230, N232, D234, and E241. 2 Phorbol-ester/DAG-type zinc fingers span residues R268–C318 and Q333–C380. One can recognise a DAGKc domain in the interval P427 to P561. The tract at residues M768–D788 is disordered.

It belongs to the eukaryotic diacylglycerol kinase family. In terms of tissue distribution, expressed specifically in brain. Highly expressed in cerebellar Purkinje cells (at protein level).

It localises to the membrane. The protein resides in the cytoplasm. Its subcellular location is the cytosol. It is found in the cytoskeleton. The catalysed reaction is a 1,2-diacyl-sn-glycerol + ATP = a 1,2-diacyl-sn-glycero-3-phosphate + ADP + H(+). The enzyme catalyses 1,2-didecanoyl-sn-glycerol + ATP = 1,2-didecanoyl-sn-glycero-3-phosphate + ADP + H(+). It catalyses the reaction 1,2-di-(9Z-octadecenoyl)-sn-glycerol + ATP = 1,2-di-(9Z-octadecenoyl)-sn-glycero-3-phosphate + ADP + H(+). It carries out the reaction 1-octadecanoyl-2-(9Z,12Z)-octadecadienoyl-sn-glycerol + ATP = 1-octadecanoyl-2-(9Z,12Z-octadecadienoyl)-sn-glycero-3-phosphate + ADP + H(+). The catalysed reaction is 1-octadecanoyl-2-(5Z,8Z,11Z,14Z-eicosatetraenoyl)-sn-glycerol + ATP = 1-octadecanoyl-2-(5Z,8Z,11Z,14Z-eicosatetraenoyl)-sn-glycero-3-phosphate + ADP + H(+). It participates in lipid metabolism; glycerolipid metabolism. With respect to regulation, the activity is calcium-dependent. Requires phosphatidylserine for maximal activity. Functionally, diacylglycerol kinase that converts diacylglycerol/DAG into phosphatidic acid/phosphatidate/PA and regulates the respective levels of these two bioactive lipids. Thereby, acts as a central switch between the signaling pathways activated by these second messengers with different cellular targets and opposite effects in numerous biological processes. Has no apparent specificity with regard to the acyl compositions of diacylglycerol. Specifically expressed in the cerebellum where it controls the level of diacylglycerol which in turn regulates the activity of protein kinase C gamma. Through protein kinase C gamma, indirectly regulates the dendritic development of Purkinje cells, cerebellar long term depression and ultimately cerebellar motor coordination. The polypeptide is Diacylglycerol kinase gamma (Dgkg) (Rattus norvegicus (Rat)).